The sequence spans 256 residues: MIPPCENAPHIIYHESQRGTRDRDIAKRLQYPSRQDLNSKWKKSVLQPPQCKMKVNVWEIKPPDFSYKLYTSLRIPERSSKPIKEEKRRKKISFPETMLHLPSIRNHPKEVTAPKFITTFPHLDLQKAKLMFVKSGQYPRGVYVNPKPHDFRQYQPGLPNFETTYEKDPFGLKFKSQHLSTVHGYQLPKDDKQKTSTERFITHKHCECTWDSKLILTKAPWPVRSASYTRHRRQRDAYSAFMDRVEEKFTKICKSR.

Positions 1–23 (MIPPCENAPHIIYHESQRGTRDR) are disordered. Positions 12 to 23 (IYHESQRGTRDR) are enriched in basic and acidic residues.

This is an uncharacterized protein from Homo sapiens (Human).